We begin with the raw amino-acid sequence, 958 residues long: Valine--tRNA ligase (958 aa).

Residues 42-52 (PNVTGSLHMGH) carry the 'HIGH' region motif. Residues 554 to 558 (KMSKS) carry the 'KMSKS' region motif. Lys-557 lines the ATP pocket. A coiled-coil region spans residues 887-956 (LVDVAAEMAR…TEQKAEFAKL (70 aa)).

This sequence belongs to the class-I aminoacyl-tRNA synthetase family. ValS type 1 subfamily. Monomer.

Its subcellular location is the cytoplasm. The catalysed reaction is tRNA(Val) + L-valine + ATP = L-valyl-tRNA(Val) + AMP + diphosphate. Catalyzes the attachment of valine to tRNA(Val). As ValRS can inadvertently accommodate and process structurally similar amino acids such as threonine, to avoid such errors, it has a 'posttransfer' editing activity that hydrolyzes mischarged Thr-tRNA(Val) in a tRNA-dependent manner. The sequence is that of Valine--tRNA ligase from Shewanella oneidensis (strain ATCC 700550 / JCM 31522 / CIP 106686 / LMG 19005 / NCIMB 14063 / MR-1).